A 199-amino-acid chain; its full sequence is UPF0301 protein Daci_1578 (199 aa).

This sequence belongs to the UPF0301 (AlgH) family.

This is UPF0301 protein Daci_1578 from Delftia acidovorans (strain DSM 14801 / SPH-1).